Reading from the N-terminus, the 232-residue chain is Large ribosomal subunit protein uL1 (232 aa).

The protein belongs to the universal ribosomal protein uL1 family. Part of the 50S ribosomal subunit.

Binds directly to 23S rRNA. The L1 stalk is quite mobile in the ribosome, and is involved in E site tRNA release. In terms of biological role, protein L1 is also a translational repressor protein, it controls the translation of the L11 operon by binding to its mRNA. In Thermosipho africanus (strain TCF52B), this protein is Large ribosomal subunit protein uL1.